The sequence spans 641 residues: Raffinose carrier protein (641 aa).

Residues 1-506 are permease; that stretch reads MQEEHNYKWV…GQVIPLAQVN (506 aa). 12 consecutive transmembrane segments (helical) span residues 25 to 45, 57 to 77, 93 to 113, 120 to 140, 168 to 188, 201 to 221, 253 to 273, 288 to 308, 317 to 337, 342 to 362, 394 to 414, and 429 to 449; these read AFYSILSGYLIIFITSHLFDT, LVTLIIMVLRIVELFIDPFIG, WVVVGGTVSSIILLLLFTNLG, AMIYLVVFAILYITMDIFYSF, LGSTIGGGLVGVLVMPAVIFF, WFIFALIICLIALISAWGVGL, LLWAALAYLFYGVGINILGSL, FSILSIINIFLGLIATSLFPV, GVFAGCLVFMLGGIAIFTIAG, LVLLAATMFGFPQQMVFLVVL, FGGAISNGVVGQIAIISGMTT, and FKLTMFAFPALMLLIAIGIFS. One can recognise a PTS EIIA type-1 domain in the interval 507–611; the sequence is DPTFAAGTLG…DDTVIMTVTN (105 aa). At H559 the chain carries Phosphohistidine; by HPr.

The protein in the N-terminal section; belongs to the sodium:galactoside symporter (TC 2.A.2) family.

It localises to the cell membrane. In Pediococcus pentosaceus, this protein is Raffinose carrier protein (rafP).